Reading from the N-terminus, the 459-residue chain is Probable rhamnogalacturonase C (459 aa).

The first 18 residues, 1–18 (MRASILPLTLFLATLAGA), serve as a signal peptide directing secretion. 5 N-linked (GlcNAc...) asparagine glycosylation sites follow: Asn-36, Asn-64, Asn-77, Asn-140, and Asn-155. A disulfide bridge links Cys-39 with Cys-65. Asp-216 functions as the Proton donor in the catalytic mechanism. Cys-218 and Cys-235 form a disulfide bridge. N-linked (GlcNAc...) asparagine glycosylation is found at Asn-236 and Asn-251. Residue His-290 is part of the active site. N-linked (GlcNAc...) asparagine glycosylation is present at Asn-315. A disulfide bridge links Cys-337 with Cys-343. A glycan (N-linked (GlcNAc...) asparagine) is linked at Asn-356. Cysteines 365 and 374 form a disulfide.

This sequence belongs to the glycosyl hydrolase 28 family.

It localises to the secreted. Pectinolytic enzymes consist of four classes of enzymes: pectine lyase, polygalacturonase, pectin methylesterase and rhamnogalacturonase. Hydrolyzes alpha-D-galacturonopyranosyl-(1,2)-alpha-L-rhamnopyranosyl linkages in the backbone of the hairy regions of pectins. This chain is Probable rhamnogalacturonase C (rhgC), found in Aspergillus niger (strain ATCC MYA-4892 / CBS 513.88 / FGSC A1513).